Here is a 318-residue protein sequence, read N- to C-terminus: Ornithine carbamoyltransferase (318 aa).

Residues 63 to 66 (STRT), Q90, R114, and 141 to 144 (HPCQ) each bind carbamoyl phosphate. L-ornithine contacts are provided by residues N172, D235, and 239-240 (SM). Residues 275–276 (CL) and R303 each bind carbamoyl phosphate.

Belongs to the aspartate/ornithine carbamoyltransferase superfamily. OTCase family.

Its subcellular location is the cytoplasm. It carries out the reaction carbamoyl phosphate + L-ornithine = L-citrulline + phosphate + H(+). The protein operates within amino-acid biosynthesis; L-arginine biosynthesis; L-arginine from L-ornithine and carbamoyl phosphate: step 1/3. Reversibly catalyzes the transfer of the carbamoyl group from carbamoyl phosphate (CP) to the N(epsilon) atom of ornithine (ORN) to produce L-citrulline. In Parasynechococcus marenigrum (strain WH8102), this protein is Ornithine carbamoyltransferase.